The sequence spans 325 residues: Palmitoyltransferase PFA3 (325 aa).

At 1–5 (MLLDR) the chain is on the cytoplasmic side. A helical membrane pass occupies residues 6–26 (IGFYFPKALSNFLILYTCCIC). The Lumenal segment spans residues 27–35 (FSRIDILPR). The helical transmembrane segment at 36–56 (IVNVVLLITLSSFALYTYWKI) threads the bilayer. Residues 57–146 (IRVGAGSPLE…ASCVGFRNQK (90 aa)) lie on the Cytoplasmic side of the membrane. The DHHC domain maps to 103–153 (RFCQTCEIWKPDRCHHCSKCNKCFLKMDHHCPWFASCVGFRNQKFFVQFLA). Residues 147–167 (FFVQFLAYTTVYSLYVLLMTS) traverse the membrane as a helical segment. The Lumenal portion of the chain corresponds to 168–185 (AQLYSWFRQMKYKSELLD). Residues 186-206 (LHLLVVWVLSVIAAIATFAFT) form a helical membrane-spanning segment. Residues 207-325 (TYTIWLVTKN…LTLRPSIEHI (119 aa)) are Cytoplasmic-facing.

Belongs to the DHHC palmitoyltransferase family. PFA3 subfamily. In terms of processing, autopalmitoylated.

It localises to the vacuole membrane. The enzyme catalyses L-cysteinyl-[protein] + hexadecanoyl-CoA = S-hexadecanoyl-L-cysteinyl-[protein] + CoA. Its function is as follows. Palmitoyltransferase specific for VAC8. Palmitoylates VAC8 at one or more of its N-terminal cysteine residues, which is required for its proper membrane localization. The polypeptide is Palmitoyltransferase PFA3 (PFA3) (Kluyveromyces lactis (strain ATCC 8585 / CBS 2359 / DSM 70799 / NBRC 1267 / NRRL Y-1140 / WM37) (Yeast)).